The sequence spans 217 residues: Ras-related protein RABA1e (217 aa).

Residue 20–27 participates in GTP binding; the sequence is GDSGVGKS. The Effector region motif lies at 42–50; it reads SKSTIGVEF. GTP contacts are provided by residues 68–72, 126–129, and 156–157; these read DTAGQ, NKAD, and SA. S-geranylgeranyl cysteine attachment occurs at residues C214 and C215.

The protein belongs to the small GTPase superfamily. Rab family.

It is found in the cell membrane. Intracellular vesicle trafficking and protein transport. This is Ras-related protein RABA1e (RABA1E) from Arabidopsis thaliana (Mouse-ear cress).